The primary structure comprises 821 residues: Leucine--tRNA ligase (821 aa).

The short motif at P44 to H54 is the 'HIGH' region element. The 'KMSKS' region motif lies at K589–S593. K592 provides a ligand contact to ATP.

Belongs to the class-I aminoacyl-tRNA synthetase family.

Its subcellular location is the cytoplasm. It catalyses the reaction tRNA(Leu) + L-leucine + ATP = L-leucyl-tRNA(Leu) + AMP + diphosphate. This chain is Leucine--tRNA ligase, found in Campylobacter concisus (strain 13826).